Here is a 709-residue protein sequence, read N- to C-terminus: Elongation factor G (709 aa).

The tr-type G domain occupies 10 to 295 (NQIRNIGIMA…AVVDYLPSPE (286 aa)). GTP-binding positions include 19-26 (AHIDAGKT), 91-95 (DTPGH), and 145-148 (NKMD).

This sequence belongs to the TRAFAC class translation factor GTPase superfamily. Classic translation factor GTPase family. EF-G/EF-2 subfamily.

The protein localises to the cytoplasm. In terms of biological role, catalyzes the GTP-dependent ribosomal translocation step during translation elongation. During this step, the ribosome changes from the pre-translocational (PRE) to the post-translocational (POST) state as the newly formed A-site-bound peptidyl-tRNA and P-site-bound deacylated tRNA move to the P and E sites, respectively. Catalyzes the coordinated movement of the two tRNA molecules, the mRNA and conformational changes in the ribosome. This chain is Elongation factor G, found in Bifidobacterium adolescentis (strain ATCC 15703 / DSM 20083 / NCTC 11814 / E194a).